A 590-amino-acid polypeptide reads, in one-letter code: Phosphatidylserine decarboxylase proenzyme 1, mitochondrial (590 aa).

The transit peptide at 1–59 (MPLKPISFRWSKTSVRSVPNPFMYGPDNLNKPLSRASQMAERVHQQTPSSTNYQQRRYF) directs the protein to the mitochondrion. The Mitochondrial matrix portion of the chain corresponds to 60-140 (SYYYYQFPKI…GKERRRFIRW (81 aa)). A helical membrane pass occupies residues 141–159 (WTVTSLTIVLGGVYAKIKY). At 160 to 590 (ERGDHEENPY…KVGQSLGGFV (431 aa)) the chain is on the mitochondrial intermembrane side. Active-site charge relay system; for autoendoproteolytic cleavage activity residues include D260, H403, and S558. Residue S558 is the Schiff-base intermediate with substrate; via pyruvic acid; for decarboxylase activity of the active site. S558 is subject to Pyruvic acid (Ser); by autocatalysis.

Belongs to the phosphatidylserine decarboxylase family. PSD-B subfamily. Eukaryotic type I sub-subfamily. In terms of assembly, heterodimer of a large membrane-associated beta subunit and a small pyruvoyl-containing alpha subunit. It depends on pyruvate as a cofactor. Post-translationally, is synthesized initially as an inactive proenzyme. Formation of the active enzyme involves a self-maturation process in which the active site pyruvoyl group is generated from an internal serine residue via an autocatalytic post-translational modification. Two non-identical subunits are generated from the proenzyme in this reaction, and the pyruvate is formed at the N-terminus of the alpha chain, which is derived from the carboxyl end of the proenzyme. The autoendoproteolytic cleavage occurs by a canonical serine protease mechanism, in which the side chain hydroxyl group of the serine supplies its oxygen atom to form the C-terminus of the beta chain, while the remainder of the serine residue undergoes an oxidative deamination to produce ammonia and the pyruvoyl prosthetic group on the alpha chain. During this reaction, the Ser that is part of the protease active site of the proenzyme becomes the pyruvoyl prosthetic group, which constitutes an essential element of the active site of the mature decarboxylase.

Its subcellular location is the mitochondrion inner membrane. It catalyses the reaction a 1,2-diacyl-sn-glycero-3-phospho-L-serine + H(+) = a 1,2-diacyl-sn-glycero-3-phosphoethanolamine + CO2. The protein operates within phospholipid metabolism; phosphatidylethanolamine biosynthesis; phosphatidylethanolamine from CDP-diacylglycerol: step 2/2. Catalyzes the formation of phosphatidylethanolamine (PtdEtn) from phosphatidylserine (PtdSer). Plays a central role in phospholipid metabolism and in the interorganelle trafficking of phosphatidylserine. Important for virulence. The polypeptide is Phosphatidylserine decarboxylase proenzyme 1, mitochondrial (Candida albicans (strain SC5314 / ATCC MYA-2876) (Yeast)).